The primary structure comprises 280 residues: MESFLAPAKINICLHVLGRREDGYHELAMLMQRVSLYDRISLSFIEGNDIRVQCDGLTLPLGQKNIAARAAQALFDRAGIRRGLDIVIEKNIPVAAGLGGGSSDAATVLMGLNDMLGLGLSATQLMQEGVKLGADVPFFIYKHPAWATGIGDKLQEVEGLPPVWYVLVNPGLEVSTAWVYQNLRLTSARDNLRIPRFSGTVDEVVELLHNDLETVTVERFPLIGEIKQQLLGLGARGALMSGSGSTVFGVFSDGDTARAAAENLSSRSGWRAFAVEPVND.

The active site involves K9. P93–S103 provides a ligand contact to ATP. D135 is a catalytic residue.

The protein belongs to the GHMP kinase family. IspE subfamily.

The enzyme catalyses 4-CDP-2-C-methyl-D-erythritol + ATP = 4-CDP-2-C-methyl-D-erythritol 2-phosphate + ADP + H(+). It participates in isoprenoid biosynthesis; isopentenyl diphosphate biosynthesis via DXP pathway; isopentenyl diphosphate from 1-deoxy-D-xylulose 5-phosphate: step 3/6. In terms of biological role, catalyzes the phosphorylation of the position 2 hydroxy group of 4-diphosphocytidyl-2C-methyl-D-erythritol. This chain is 4-diphosphocytidyl-2-C-methyl-D-erythritol kinase, found in Syntrophotalea carbinolica (strain DSM 2380 / NBRC 103641 / GraBd1) (Pelobacter carbinolicus).